Consider the following 1440-residue polypeptide: Glucose transporter type 1 (1440 aa).

Positions 1 to 23 (MAFLCAPGLTFFLTYSIFSAVLG) are cleaved as a signal peptide. Residues 24–67 (MLQFGYNTGVINAPEKNIENFMKDVYKDRYGEDISEEFIQQLYS) are Cytoplasmic-facing. Residues 68 to 88 (VAVSIFAIGGMLGGFSGGWMA) form a helical membrane-spanning segment. The Extracellular portion of the chain corresponds to 89-95 (NRFGRKG). The helical transmembrane segment at 96–116 (GLLLNNVLGIAGACLMGFTKV) threads the bilayer. At 117 to 127 (SHSYEMLFLGR) the chain is on the cytoplasmic side. Residues 128 to 148 (FIIGVNCGLNTSLVPMYISEI) traverse the membrane as a helical segment. Residues 149-162 (APLNLRGGLGTVNQ) lie on the Extracellular side of the membrane. Glutamine 162 contacts D-glucose. Residues 163–183 (LAVTVGLLLSQVLGIEQILGT) traverse the membrane as a helical segment. Topologically, residues 184–186 (NEG) are cytoplasmic. Residues 187 to 207 (WPILLGLAICPAILQLILLPV) traverse the membrane as a helical segment. Residues 208–272 (CPESPRYLLI…LICSPTLRPP (65 aa)) lie on the Extracellular side of the membrane. Residues 273–293 (LIIGIVMQLSQQFSGINAVFY) form a helical membrane-spanning segment. D-glucose-binding positions include 283–284 (QQ) and asparagine 289. Residues 294-310 (YSTSLFMSSGLTEESAK) lie on the Cytoplasmic side of the membrane. The helical transmembrane segment at 311-331 (FATIGIGAIMVVMTLVSIPLM) threads the bilayer. Topologically, residues 332 to 339 (DRTGRRTL) are extracellular. The chain crosses the membrane as a helical span at residues 340–360 (HLYGLGGMFIFSIFITISFLI). Residues 361–372 (KEMIDWMSYLSV) are Cytoplasmic-facing. A helical transmembrane segment spans residues 373 to 393 (VATLGFVVFFAVGPGSIPWMI). Tryptophan 391 contacts D-glucose. The Extracellular segment spans residues 394-405 (TAELFSQGPRPS). The helical transmembrane segment at 406–426 (AMAIAVLVNWMANFVVGIGFP) threads the bilayer. The Cytoplasmic segment spans residues 427–429 (SMK). A helical membrane pass occupies residues 430 to 450 (TALENYTFLPFSVFLAIFWIF). The Extracellular portion of the chain corresponds to 451–534 (TYKKVPETKN…GPYPLSDSTN (84 aa)). Residues asparagine 460 and asparagine 480 are each glycosylated (N-linked (GlcNAc...) asparagine). The chain crosses the membrane as a helical span at residues 535 to 555 (LLGPGSSSYGPGGVLGLAGSG). The Cytoplasmic portion of the chain corresponds to 556–1440 (SGLGGQCYTN…RKYTDFLRKK (885 aa)). Disordered stretches follow at residues 628-708 (ERFL…SRYA), 725-808 (QANP…HSVM), 966-987 (APEG…SELP), 1000-1083 (FLAD…GSYH), 1304-1330 (LEGA…PLTH), and 1380-1401 (ANSP…GHHV). Positions 669-678 (PPDSASVRST) are enriched in polar residues. Low complexity predominate over residues 686–704 (QPQQVHHQQQQVHHQQQHQ). Residues 730-739 (QAPPQQPAPP) show a composition bias toward pro residues. Positions 754 to 789 (CQQRKHSHSPHHSRHTSPHSHHHHSHHSRHSRRSRR) are enriched in basic residues. The segment covering 1313–1330 (STTSEHSSSLPSPQPLTH) has biased composition (low complexity).

The protein belongs to the major facilitator superfamily. Sugar transporter (TC 2.A.1.1) family. Glucose transporter subfamily.

The protein resides in the membrane. Functionally, facilitative glucose transporter. The sequence is that of Glucose transporter type 1 (Glut1) from Drosophila melanogaster (Fruit fly).